A 158-amino-acid polypeptide reads, in one-letter code: NAD(P)H-quinone oxidoreductase subunit J, chloroplastic (158 aa).

Belongs to the complex I 30 kDa subunit family. In terms of assembly, NDH is composed of at least 16 different subunits, 5 of which are encoded in the nucleus.

The protein resides in the plastid. Its subcellular location is the chloroplast thylakoid membrane. The catalysed reaction is a plastoquinone + NADH + (n+1) H(+)(in) = a plastoquinol + NAD(+) + n H(+)(out). It catalyses the reaction a plastoquinone + NADPH + (n+1) H(+)(in) = a plastoquinol + NADP(+) + n H(+)(out). Its function is as follows. NDH shuttles electrons from NAD(P)H:plastoquinone, via FMN and iron-sulfur (Fe-S) centers, to quinones in the photosynthetic chain and possibly in a chloroplast respiratory chain. The immediate electron acceptor for the enzyme in this species is believed to be plastoquinone. Couples the redox reaction to proton translocation, and thus conserves the redox energy in a proton gradient. The polypeptide is NAD(P)H-quinone oxidoreductase subunit J, chloroplastic (Fagopyrum esculentum subsp. ancestrale (Wild buckwheat)).